We begin with the raw amino-acid sequence, 576 residues long: Trehalase (576 aa).

Residues Met-1 to Ala-20 form the signal peptide. N-linked (GlcNAc...) asparagine glycosylation occurs at Asn-75. Substrate contacts are provided by residues Arg-165, Trp-172 to Asp-173, Asn-209, and Arg-218 to Gln-220. Residue Asn-258 is glycosylated (N-linked (GlcNAc...) asparagine). Substrate contacts are provided by residues Arg-283 to Glu-285 and Gly-316. Asp-318 (proton donor/acceptor) is an active-site residue. Asn-366 carries N-linked (GlcNAc...) asparagine glycosylation. The Proton donor/acceptor role is filled by Glu-511. Glu-526 is a binding site for substrate. A lipid anchor (GPI-anchor amidated serine) is attached at Ser-553. Positions Gly-554–Gln-576 are cleaved as a propeptide — removed in mature form.

The protein belongs to the glycosyl hydrolase 37 family. In terms of assembly, homodimer; disulfide-linked.

Its subcellular location is the cell membrane. It catalyses the reaction alpha,alpha-trehalose + H2O = alpha-D-glucose + beta-D-glucose. Its function is as follows. Intestinal trehalase is probably involved in the hydrolysis of ingested trehalose. This Mus musculus (Mouse) protein is Trehalase.